Here is a 111-residue protein sequence, read N- to C-terminus: uncharacterized protein (111 aa).

This is an uncharacterized protein from Streptomyces coelicolor (strain ATCC BAA-471 / A3(2) / M145).